A 407-amino-acid polypeptide reads, in one-letter code: Arginine biosynthesis bifunctional protein ArgJ (407 aa).

The substrate site is built by Thr-157, Lys-183, Thr-194, Glu-280, Asn-402, and Thr-407. The Nucleophile role is filled by Thr-194.

Belongs to the ArgJ family. In terms of assembly, heterotetramer of two alpha and two beta chains.

It is found in the cytoplasm. The catalysed reaction is N(2)-acetyl-L-ornithine + L-glutamate = N-acetyl-L-glutamate + L-ornithine. It carries out the reaction L-glutamate + acetyl-CoA = N-acetyl-L-glutamate + CoA + H(+). It functions in the pathway amino-acid biosynthesis; L-arginine biosynthesis; L-ornithine and N-acetyl-L-glutamate from L-glutamate and N(2)-acetyl-L-ornithine (cyclic): step 1/1. Its pathway is amino-acid biosynthesis; L-arginine biosynthesis; N(2)-acetyl-L-ornithine from L-glutamate: step 1/4. In terms of biological role, catalyzes two activities which are involved in the cyclic version of arginine biosynthesis: the synthesis of N-acetylglutamate from glutamate and acetyl-CoA as the acetyl donor, and of ornithine by transacetylation between N(2)-acetylornithine and glutamate. The polypeptide is Arginine biosynthesis bifunctional protein ArgJ (Bacillus anthracis).